A 566-amino-acid polypeptide reads, in one-letter code: Cyclin G (566 aa).

The 84-residue stretch at 285–368 (MWYELPSDVL…VIANKLGVQM (84 aa)) folds into the Cyclin N-terminal domain.

The protein belongs to the cyclin family. Cyclin G subfamily. Interacts with corto. Interacts with the cyclin-dependent kinases Cdk2 and Cdk4. Interacts with Brca2 and Rad9. Interacts with polycomb protein Asx. Interacts with protein phosphatase 2A subunit wdb.

Its subcellular location is the chromosome. In terms of biological role, cyclin with roles in multiple processes including transcription, meiotic recombination repair, cell cycle regulation, and promotion of normal growth and metabolism. Binds to the promoter region of the homeobox gene Abd-B and is involved in maintaining Abd-B expression in the pupal epithelium. Involved in the transcriptional repression of the homeotic genes Scr and Ubx. Plays a role in meiotic recombination repair of DNA double-strand breaks which ensures efficient translation of grk and promotes grk activity in the oocyte, leading to oocyte dorso-ventral axis formation following secretion of grk from the oocyte and its binding to Egfr in the directly overlying follicle cells. Negatively regulates the binding of serine/threonine-protein kinase Akt1 to the protein phosphatase 2A subunit wdb, promoting normal growth and metabolism. Required for the formation of bilateral symmetry. Negatively regulates cell cycle progression by preventing G1 to S transition and retarding S-phase progression. In Drosophila melanogaster (Fruit fly), this protein is Cyclin G.